The primary structure comprises 446 residues: Probable D-serine dehydratase (446 aa).

Lys116 carries the post-translational modification N6-(pyridoxal phosphate)lysine.

The protein belongs to the serine/threonine dehydratase family. DsdA subfamily. It depends on pyridoxal 5'-phosphate as a cofactor.

It catalyses the reaction D-serine = pyruvate + NH4(+). The polypeptide is Probable D-serine dehydratase (Bacillus thuringiensis (strain Al Hakam)).